A 147-amino-acid chain; its full sequence is Hemoglobin larval subunit beta-1 (147 aa).

One can recognise a Globin domain in the interval 3–147 (HLSADEKSAI…LVAALSHGYF (145 aa)). Residues His64 and His93 each coordinate heme b.

This sequence belongs to the globin family. Heterotetramer of two alpha chains and two beta chains. Red blood cells.

In terms of biological role, this is a larval (tadpole) beta-globin. The chain is Hemoglobin larval subunit beta-1 from Xenopus laevis (African clawed frog).